Reading from the N-terminus, the 550-residue chain is MAESHIMSSEAPPKTNTGLNFRTNCRMVLNLLREKDCSVTFSPEQPLTPVTDLAVGFSNLSTFSGETPKRCLDLSNLGDETAPLPTESPDRISSGKVESPKAQFVQFDGLFTPDLGWKAKKCPRGNMNSVLPRLLCSTPSFKKTSGGQRSVSNKENEGELFKSPNCKPVALLLPQEVVDSQFSPTPENKVDISLDEDCEMNILGSPISADPPCLDGAHDDIKMQNLDGFADFFSVDEEEMENPPGAVGNLSSSMAILLSGPLLNQDIEVSNVNNISLNRSRLYRSPSMPEKLDRPMLKRPVRPLDSETPVRVKRRRSTSSSLQPQEENFQPQRRGTSLKKTLSLCDVDISTVLDEDCGHRQLIGDFTKVYALPTVTGRHQDLRYITGETLAALIHGDFSSLVEKIFIIDCRYPYEYDGGHIKGALNLHRQEEVTDYFLKQPLTPTMAQKRLIIIFHCEFSSERGPKMCRFLREEDRARNEYPSLYYPELYLLKGGYKDFFPEYKELCEPQSYCPMHHQDFREELLKFRTKCKTSVGDRKRREQIARIMKL.

Disordered stretches follow at residues 76-98 (NLGD…GKVE) and 285-335 (SPSM…QRRG). Over residues 290–310 (EKLDRPMLKRPVRPLDSETPV) the composition is skewed to basic and acidic residues. A compositionally biased stretch (polar residues) spans 322–335 (LQPQEENFQPQRRG). One can recognise a Rhodanese domain in the interval 401-508 (LVEKIFIIDC…FFPEYKELCE (108 aa)). Residue cysteine 457 is part of the active site.

Belongs to the MPI phosphatase family.

The catalysed reaction is O-phospho-L-tyrosyl-[protein] + H2O = L-tyrosyl-[protein] + phosphate. In terms of biological role, tyrosine protein phosphatase which functions as a dosage-dependent inducer of mitotic progression. Directly dephosphorylates CDK1 and stimulates its kinase activity. This Xenopus laevis (African clawed frog) protein is M-phase inducer phosphatase 1-B (cdc25-1-b).